Consider the following 194-residue polypeptide: Potassium-transporting ATPase KdpC subunit (194 aa).

The helical transmembrane segment at 12 to 34 (LFLLLLTGGVYPLLTTALGQWWF) threads the bilayer.

It belongs to the KdpC family. The system is composed of three essential subunits: KdpA, KdpB and KdpC.

Its subcellular location is the cell inner membrane. Its function is as follows. Part of the high-affinity ATP-driven potassium transport (or Kdp) system, which catalyzes the hydrolysis of ATP coupled with the electrogenic transport of potassium into the cytoplasm. This subunit acts as a catalytic chaperone that increases the ATP-binding affinity of the ATP-hydrolyzing subunit KdpB by the formation of a transient KdpB/KdpC/ATP ternary complex. The polypeptide is Potassium-transporting ATPase KdpC subunit (Salmonella schwarzengrund (strain CVM19633)).